Reading from the N-terminus, the 277-residue chain is Thymidylate synthase (277 aa).

Position 27 (arginine 27) interacts with dUMP. Histidine 57 contributes to the (6R)-5,10-methylene-5,6,7,8-tetrahydrofolate binding site. 132-133 (RR) provides a ligand contact to dUMP. Cysteine 152 functions as the Nucleophile in the catalytic mechanism. DUMP is bound by residues 179–182 (RSAD), asparagine 190, and 220–222 (HIY). Aspartate 182 provides a ligand contact to (6R)-5,10-methylene-5,6,7,8-tetrahydrofolate. (6R)-5,10-methylene-5,6,7,8-tetrahydrofolate is bound at residue alanine 276.

It belongs to the thymidylate synthase family. Bacterial-type ThyA subfamily. Homodimer.

The protein localises to the cytoplasm. It catalyses the reaction dUMP + (6R)-5,10-methylene-5,6,7,8-tetrahydrofolate = 7,8-dihydrofolate + dTMP. It participates in pyrimidine metabolism; dTTP biosynthesis. Its function is as follows. Catalyzes the reductive methylation of 2'-deoxyuridine-5'-monophosphate (dUMP) to 2'-deoxythymidine-5'-monophosphate (dTMP) while utilizing 5,10-methylenetetrahydrofolate (mTHF) as the methyl donor and reductant in the reaction, yielding dihydrofolate (DHF) as a by-product. This enzymatic reaction provides an intracellular de novo source of dTMP, an essential precursor for DNA biosynthesis. This is Thymidylate synthase from Acidovorax sp. (strain JS42).